A 103-amino-acid chain; its full sequence is MKATIRFIKISPTKVRRITNQIKGLKYADACILLKFMKGRIAKTILKLVNSAFSNSRYSTFADLRIQTVLVEKGPIFNRFQPRAKGRAYPIKKYTSHIKVVLS.

The protein belongs to the universal ribosomal protein uL22 family. As to quaternary structure, part of the 50S ribosomal subunit.

It is found in the plastid. The protein resides in the chloroplast. Its function is as follows. This protein binds specifically to 23S rRNA. The globular domain of the protein is located near the polypeptide exit tunnel on the outside of the subunit, while an extended beta-hairpin is found that lines the wall of the exit tunnel in the center of the 70S ribosome. This is Large ribosomal subunit protein uL22c (rpl22) from Cyanidium caldarium (Red alga).